Consider the following 89-residue polypeptide: Small ribosomal subunit protein uS15 (89 aa).

It belongs to the universal ribosomal protein uS15 family. In terms of assembly, part of the 30S ribosomal subunit. Forms a bridge to the 50S subunit in the 70S ribosome, contacting the 23S rRNA.

Functionally, one of the primary rRNA binding proteins, it binds directly to 16S rRNA where it helps nucleate assembly of the platform of the 30S subunit by binding and bridging several RNA helices of the 16S rRNA. Forms an intersubunit bridge (bridge B4) with the 23S rRNA of the 50S subunit in the ribosome. This is Small ribosomal subunit protein uS15 from Colwellia psychrerythraea (strain 34H / ATCC BAA-681) (Vibrio psychroerythus).